A 231-amino-acid chain; its full sequence is Transmembrane gamma-carboxyglutamic acid protein 3 (231 aa).

Residues 1-19 (MAVFLEAKNAHAVLKRFPR) constitute a propeptide that is removed on maturation. The 46-residue stretch at 20-65 (ANEFLEELRQGTIERECMEEICSYEEVKEVFENKEKTMEFWKGYPN) folds into the Gla domain. The Extracellular segment spans residues 20–78 (ANEFLEELRQGTIERECMEEICSYEEVKEVFENKEKTMEFWKGYPNAVYSVRDPSQSSD). Residues glutamate 22, glutamate 25, glutamate 26, glutamate 33, glutamate 35, glutamate 38, glutamate 39, glutamate 44, glutamate 45, glutamate 48, glutamate 51, glutamate 54, and glutamate 58 each carry the 4-carboxyglutamate modification. An intrachain disulfide couples cysteine 36 to cysteine 41. Residues 79–101 (AMYVVVPLLGVVLLIVIALFIIW) traverse the membrane as a helical segment. Over 102 to 231 (RCQLQKATRH…IVAASPSADK (130 aa)) the chain is Cytoplasmic. Disordered regions lie at residues 140-165 (HSQGESSGHREAGNNPQIVMGPSRGG) and 184-231 (RLSS…SADK). Residues 201-212 (QEGSSEEASVSY) are compositionally biased toward polar residues.

In terms of processing, gla residues are produced after subsequent post-translational modifications of glutamate by a vitamin K-dependent gamma-carboxylase.

It localises to the membrane. The protein is Transmembrane gamma-carboxyglutamic acid protein 3 (Prrg3) of Mus musculus (Mouse).